Consider the following 305-residue polypeptide: HPr kinase/phosphorylase (305 aa).

Active-site residues include histidine 138 and lysine 159. 153-160 (GESGIGKS) is an ATP binding site. Serine 160 contributes to the Mg(2+) binding site. Aspartate 177 functions as the Proton acceptor; for phosphorylation activity. Proton donor; for dephosphorylation activity in the catalytic mechanism. The tract at residues 201 to 210 (IEIRGIGILD) is important for the catalytic mechanism of both phosphorylation and dephosphorylation. Glutamate 202 is a Mg(2+) binding site. The active site involves arginine 243. The tract at residues 264–269 (PVRPGR) is important for the catalytic mechanism of dephosphorylation.

It belongs to the HPrK/P family. In terms of assembly, homohexamer. Mg(2+) is required as a cofactor.

The catalysed reaction is [HPr protein]-L-serine + ATP = [HPr protein]-O-phospho-L-serine + ADP + H(+). It catalyses the reaction [HPr protein]-O-phospho-L-serine + phosphate + H(+) = [HPr protein]-L-serine + diphosphate. Catalyzes the ATP- as well as the pyrophosphate-dependent phosphorylation of a specific serine residue in HPr, a phosphocarrier protein of the phosphoenolpyruvate-dependent sugar phosphotransferase system (PTS). HprK/P also catalyzes the pyrophosphate-producing, inorganic phosphate-dependent dephosphorylation (phosphorolysis) of seryl-phosphorylated HPr (P-Ser-HPr). The two antagonistic activities of HprK/P are regulated by several intracellular metabolites, which change their concentration in response to the absence or presence of rapidly metabolisable carbon sources (glucose, fructose, etc.) in the growth medium. Therefore, by controlling the phosphorylation state of HPr, HPrK/P is a sensor enzyme that plays a major role in the regulation of carbon metabolism and sugar transport: it mediates carbon catabolite repression (CCR), and regulates PTS-catalyzed carbohydrate uptake and inducer exclusion. This Thermoanaerobacter pseudethanolicus (strain ATCC 33223 / 39E) (Clostridium thermohydrosulfuricum) protein is HPr kinase/phosphorylase.